Reading from the N-terminus, the 98-residue chain is Serine protease inhibitor Kazal-type 14 (98 aa).

The first 23 residues, 1–23, serve as a signal peptide directing secretion; that stretch reads MVKYFQVLWSLLFSIMLHSMLLA. The 64-residue stretch at 35–98 folds into the Kazal-like domain; it reads GLIKIKCPYK…QIRYYHTGRC (64 aa). 3 cysteine pairs are disulfide-bonded: C41-C80, C58-C77, and C66-C98. N52 carries an N-linked (GlcNAc...) asparagine glycan.

It is found in the secreted. In terms of biological role, may be a serine protease inhibitor. The polypeptide is Serine protease inhibitor Kazal-type 14 (Spink14) (Rattus norvegicus (Rat)).